The sequence spans 101 residues: NADH-quinone oxidoreductase subunit K (101 aa).

3 helical membrane-spanning segments follow: residues 4-24 (LGHL…GIFL), 30-50 (IVLL…FIAF), and 62-82 (FVFF…AILV).

It belongs to the complex I subunit 4L family. As to quaternary structure, NDH-1 is composed of 14 different subunits. Subunits NuoA, H, J, K, L, M, N constitute the membrane sector of the complex.

It is found in the cell inner membrane. The catalysed reaction is a quinone + NADH + 5 H(+)(in) = a quinol + NAD(+) + 4 H(+)(out). NDH-1 shuttles electrons from NADH, via FMN and iron-sulfur (Fe-S) centers, to quinones in the respiratory chain. The immediate electron acceptor for the enzyme in this species is believed to be ubiquinone. Couples the redox reaction to proton translocation (for every two electrons transferred, four hydrogen ions are translocated across the cytoplasmic membrane), and thus conserves the redox energy in a proton gradient. The chain is NADH-quinone oxidoreductase subunit K from Xylella fastidiosa (strain 9a5c).